A 348-amino-acid chain; its full sequence is Phosphoribosylformylglycinamidine cyclo-ligase (348 aa).

The protein belongs to the AIR synthase family.

It localises to the cytoplasm. It carries out the reaction 2-formamido-N(1)-(5-O-phospho-beta-D-ribosyl)acetamidine + ATP = 5-amino-1-(5-phospho-beta-D-ribosyl)imidazole + ADP + phosphate + H(+). Its pathway is purine metabolism; IMP biosynthesis via de novo pathway; 5-amino-1-(5-phospho-D-ribosyl)imidazole from N(2)-formyl-N(1)-(5-phospho-D-ribosyl)glycinamide: step 2/2. In Cereibacter sphaeroides (strain ATCC 17029 / ATH 2.4.9) (Rhodobacter sphaeroides), this protein is Phosphoribosylformylglycinamidine cyclo-ligase.